Here is a 365-residue protein sequence, read N- to C-terminus: Patr class I histocompatibility antigen, A-126 alpha chain (365 aa).

Residues 1–24 (MAVMAPRTLVLLLSGALALTQTWA) form the signal peptide. The segment at 25–114 (GSHSMRYFST…LRGYYNQSED (90 aa)) is alpha-1. Residues 25-308 (GSHSMRYFST…EPSSQPTIPI (284 aa)) lie on the Extracellular side of the membrane. Asn-110 carries an N-linked (GlcNAc...) asparagine glycan. Positions 115–206 (GSHTIQLMFG…ENGKETLQRT (92 aa)) are alpha-2. 2 disulfide bridges follow: Cys-125/Cys-188 and Cys-227/Cys-283. The interval 207-298 (DPPKTHMTHH…GLPKPLTLRW (92 aa)) is alpha-3. Residues 209–295 (PKTHMTHHPI…QHEGLPKPLT (87 aa)) enclose the Ig-like C1-type domain. Residues 299-308 (EPSSQPTIPI) form a connecting peptide region. Residues 309–332 (VGIIAGLVLLGAVITGAVVAAVMW) form a helical membrane-spanning segment. The Cytoplasmic portion of the chain corresponds to 333 to 365 (RRKSSDRKGGSYSQAASSDSAQGSDVSLTACKV). A disordered region spans residues 338–365 (DRKGGSYSQAASSDSAQGSDVSLTACKV). Positions 342–359 (GSYSQAASSDSAQGSDVS) are enriched in low complexity. Ser-343 carries the post-translational modification Phosphoserine. Tyr-344 is subject to Phosphotyrosine. A phosphoserine mark is found at Ser-345, Ser-349, Ser-352, Ser-356, and Ser-359.

It belongs to the MHC class I family. As to quaternary structure, heterodimer of an alpha chain and a beta chain (beta-2-microglobulin).

The protein localises to the membrane. Its function is as follows. Involved in the presentation of foreign antigens to the immune system. The protein is Patr class I histocompatibility antigen, A-126 alpha chain (Patr-A) of Pan troglodytes (Chimpanzee).